The sequence spans 429 residues: 3-phosphoshikimate 1-carboxyvinyltransferase (429 aa).

Residues K11, S12, and R16 each contribute to the 3-phosphoshikimate site. Residue K11 participates in phosphoenolpyruvate binding. Phosphoenolpyruvate-binding residues include G82 and R110. 4 residues coordinate 3-phosphoshikimate: S155, Q157, D302, and K329. Residue Q157 participates in phosphoenolpyruvate binding. The active-site Proton acceptor is D302. Residues R333 and R385 each contribute to the phosphoenolpyruvate site.

It belongs to the EPSP synthase family. In terms of assembly, monomer.

It is found in the cytoplasm. The enzyme catalyses 3-phosphoshikimate + phosphoenolpyruvate = 5-O-(1-carboxyvinyl)-3-phosphoshikimate + phosphate. It participates in metabolic intermediate biosynthesis; chorismate biosynthesis; chorismate from D-erythrose 4-phosphate and phosphoenolpyruvate: step 6/7. Catalyzes the transfer of the enolpyruvyl moiety of phosphoenolpyruvate (PEP) to the 5-hydroxyl of shikimate-3-phosphate (S3P) to produce enolpyruvyl shikimate-3-phosphate and inorganic phosphate. The polypeptide is 3-phosphoshikimate 1-carboxyvinyltransferase (Helicobacter pylori (strain Shi470)).